Reading from the N-terminus, the 713-residue chain is Peroxisomal biogenesis factor 8 (713 aa).

Residues 1-31 are disordered; the sequence is MYRLGSQGRSIQSQLQNGDSSSGRPLQLQGT. The segment covering 7-30 has biased composition (polar residues); the sequence is QGRSIQSQLQNGDSSSGRPLQLQG. A Microbody targeting signal motif is present at residues 711 to 713; the sequence is AKL.

Interacts with PEX5 (via N-terminus).

It is found in the peroxisome membrane. Its function is as follows. Essential component of the machinery required for the import of both PTS1 and PTS2 (and perhaps all) peroxisomal matrix proteins. Binding of PEX8 to the N-terminus of PEX5 cargo receptor induces a conformational change of the TPR domains and decrease their binding affinity to cargo, facilitating the release of the PTS1 proteins within the peroxisome. The polypeptide is Peroxisomal biogenesis factor 8 (Komagataella phaffii (strain GS115 / ATCC 20864) (Yeast)).